A 514-amino-acid polypeptide reads, in one-letter code: Protein nucleotidyltransferase YdiU (514 aa).

ATP-binding residues include Gly-90, Gly-92, Arg-93, Lys-113, Asp-125, Gly-126, Arg-176, and Arg-183. Catalysis depends on Asp-267, which acts as the Proton acceptor. Residues Asn-268 and Asp-277 each contribute to the Mg(2+) site. ATP is bound at residue Asp-277.

The protein belongs to the SELO family. Requires Mg(2+) as cofactor. The cofactor is Mn(2+).

The enzyme catalyses L-seryl-[protein] + ATP = 3-O-(5'-adenylyl)-L-seryl-[protein] + diphosphate. The catalysed reaction is L-threonyl-[protein] + ATP = 3-O-(5'-adenylyl)-L-threonyl-[protein] + diphosphate. It catalyses the reaction L-tyrosyl-[protein] + ATP = O-(5'-adenylyl)-L-tyrosyl-[protein] + diphosphate. It carries out the reaction L-histidyl-[protein] + UTP = N(tele)-(5'-uridylyl)-L-histidyl-[protein] + diphosphate. The enzyme catalyses L-seryl-[protein] + UTP = O-(5'-uridylyl)-L-seryl-[protein] + diphosphate. The catalysed reaction is L-tyrosyl-[protein] + UTP = O-(5'-uridylyl)-L-tyrosyl-[protein] + diphosphate. Nucleotidyltransferase involved in the post-translational modification of proteins. It can catalyze the addition of adenosine monophosphate (AMP) or uridine monophosphate (UMP) to a protein, resulting in modifications known as AMPylation and UMPylation. In Photobacterium profundum (strain SS9), this protein is Protein nucleotidyltransferase YdiU.